A 239-amino-acid polypeptide reads, in one-letter code: ATP-dependent dethiobiotin synthetase BioD (239 aa).

Residue 13–18 (EIGKTV) coordinates ATP. T17 contributes to the Mg(2+) binding site. Residue K38 is part of the active site. T42 lines the substrate pocket. Mg(2+) contacts are provided by K59 and E111. ATP-binding positions include 111–114 (EGAG), 175–176 (NQ), and 204–206 (PSL).

It belongs to the dethiobiotin synthetase family. In terms of assembly, homodimer. It depends on Mg(2+) as a cofactor.

It localises to the cytoplasm. The catalysed reaction is (7R,8S)-7,8-diammoniononanoate + CO2 + ATP = (4R,5S)-dethiobiotin + ADP + phosphate + 3 H(+). It participates in cofactor biosynthesis; biotin biosynthesis; biotin from 7,8-diaminononanoate: step 1/2. In terms of biological role, catalyzes a mechanistically unusual reaction, the ATP-dependent insertion of CO2 between the N7 and N8 nitrogen atoms of 7,8-diaminopelargonic acid (DAPA, also called 7,8-diammoniononanoate) to form a ureido ring. In Geobacillus sp. (strain WCH70), this protein is ATP-dependent dethiobiotin synthetase BioD.